The sequence spans 441 residues: Growth/differentiation factor 9 (441 aa).

The N-terminal stretch at Met-1–Thr-29 is a signal peptide. Positions Glu-30–Arg-306 are excised as a propeptide. 4 N-linked (GlcNAc...) asparagine glycosylation sites follow: Asn-163, Asn-229, Asn-258, and Asn-325. Disulfide bonds link Cys-340–Cys-406, Cys-369–Cys-438, and Cys-373–Cys-440.

This sequence belongs to the TGF-beta family. In terms of assembly, homodimer or heterodimer (Potential). But, in contrast to other members of this family, cannot be disulfide-linked. Phosphorylated; phosphorylation is critical for GDF9 function. As to expression, ovary. Strongly expressed in germinal vesicle (GV) stage oocytes, MII-stage oocytes and in zygotes.

The protein resides in the secreted. Required for ovarian folliculogenesis. In Mus musculus (Mouse), this protein is Growth/differentiation factor 9 (Gdf9).